The chain runs to 314 residues: MSAAEAGGVFHRARGRTLAAFPAEKESEWKGPFYFILGADPQFGLIKAWSTGDCDNGGDEWEQEIRLTEQAVQAINKLNPKPKFFVLCGDLIHAMPGKPWRTEQTEDLKRVLRAVDRAIPLVLVSGNHDIGNTPTAETVEEFCRTWGDDYFSFWVGGVLFLVLNSQFYENPSKCPSLKQAQDQWLDEQLSIARQRHCQHAIVFQHIPLFLESIDEDDDYYFNLSKSTRKKLADKFIHAGVKVVFSGHYHRNAGGTYQNLDMVVSSAIGCQLGRDPHGLRVVVVTAEKIVHRYYSLDELSEKGIEDDLMDLIKKK.

Ser2 is modified (phosphoserine). Positions 47–250 (KAWSTGDCDN…KVVFSGHYHR (204 aa)) are catalytic. The a divalent metal cation site is built by Asp53, Asp90, Asn127, and His247. Phosphoserine is present on Ser294.

The protein belongs to the metallophosphoesterase superfamily. CPPED1 family. It depends on a divalent metal cation as a cofactor. In terms of tissue distribution, expressed in subcutaneous adipose tissue.

It is found in the cytoplasm. It carries out the reaction O-phospho-L-seryl-[protein] + H2O = L-seryl-[protein] + phosphate. It catalyses the reaction O-phospho-L-threonyl-[protein] + H2O = L-threonyl-[protein] + phosphate. Its function is as follows. Protein phosphatase that dephosphorylates AKT family kinase specifically at 'Ser-473', blocking cell cycle progression and promoting cell apoptosis. May play an inhibitory role in glucose uptake by adipocytes. The chain is Serine/threonine-protein phosphatase CPPED1 (CPPED1) from Homo sapiens (Human).